The sequence spans 1693 residues: Latrophilin Cirl (1693 aa).

At Met1 to Arg774 the chain is on the extracellular side. Positions Ala30 to Val119 constitute an SUEL-type lectin domain. Asn147, Asn260, Asn306, and Asn345 each carry an N-linked (GlcNAc...) asparagine glycan. The disordered stretch occupies residues Pro190–Ala309. 2 stretches are compositionally biased toward polar residues: residues Ser259–Ile269 and Lys287–Ala309. Residues Ser379 to Ser406 form a disordered region. A compositionally biased stretch (low complexity) spans Thr390–Ser399. Asn405, Asn662, Asn710, and Asn737 each carry an N-linked (GlcNAc...) asparagine glycan. The GAIN-B domain maps to Arg568–His761. 2 disulfide bridges follow: Cys716–Cys743 and Cys731–Cys745. The GPS stretch occupies residues Cys716 to His761. A helical transmembrane segment spans residues Ile775–Leu795. Residues Lys796–Thr808 are Cytoplasmic-facing. The chain crosses the membrane as a helical span at residues Ser809–Ile829. Residues Glu830–Ser835 lie on the Extracellular side of the membrane. The helical transmembrane segment at Ile836–Phe856 threads the bilayer. Topologically, residues Cys857–Val882 are cytoplasmic. A helical membrane pass occupies residues Asn883–Ile903. Topologically, residues Asn904 to Phe927 are extracellular. A helical membrane pass occupies residues Val928–Ile948. The Cytoplasmic portion of the chain corresponds to Met949–Ser975. Residues Phe976–Ala996 form a helical membrane-spanning segment. At Lys997–Thr1003 the chain is on the extracellular side. A helical membrane pass occupies residues Gly1004 to Phe1024. Residues His1025–Lys1693 lie on the Cytoplasmic side of the membrane. Positions Pro1089–Thr1109 are disordered. 3 positions are modified to phosphoserine: Ser1165, Ser1256, and Ser1263. 4 disordered regions span residues Lys1237–Arg1264, Lys1279–Pro1362, Ser1450–Gln1529, and Ser1596–Leu1678. Positions Gln1307–Leu1323 are enriched in low complexity. Ser1324 and Ser1325 each carry phosphoserine. Positions Leu1337–Leu1357 are enriched in low complexity. Positions Arg1464–Gln1475 are enriched in polar residues. 2 stretches are compositionally biased toward acidic residues: residues Asp1485–Thr1498 and Cys1508–Asp1521. The span at Gln1640 to His1663 shows a compositional bias: low complexity.

The protein belongs to the G-protein coupled receptor 2 family. LN-TM7 subfamily. Forms a heterodimer, consisting of a large extracellular region non-covalently linked to a seven-transmembrane moiety. In terms of processing, proteolytically cleaved into 2 subunits, an extracellular subunit and a seven-transmembrane subunit.

The protein resides in the cell membrane. The chain is Latrophilin Cirl from Drosophila pseudoobscura pseudoobscura (Fruit fly).